The chain runs to 672 residues: GPI mannosyltransferase pigv-1 (672 aa).

Topologically, residues 1–134 are cytoplasmic; that stretch reads MRRREPGRDV…TQRCLGFCFR (134 aa). Residues 82 to 94 show a composition bias toward basic and acidic residues; that stretch reads REESDSSSSREDS. The interval 82-115 is disordered; it reads REESDSSSSREDSPLGSTETGESCSTTDDEESKE. The span at 97–107 shows a compositional bias: low complexity; the sequence is GSTETGESCST. Residues 135–155 form a helical membrane-spanning segment; sequence QLFFSRMWVFILQFIASYYAG. Over 156–239 the chain is Extracellular; the sequence is DRFRTDGFNL…NGMESVFGWT (84 aa). A helical transmembrane segment spans residues 240–260; sequence FPPWVTITLAAVFVNLFCFLL. The Cytoplasmic segment spans residues 261-277; that stretch reads CGMTLYQVVLIMTRSVK. The next 2 helical transmembrane spans lie at 278–298 and 299–319; these read ISLL…FSSA and YSES…LFGL. Residues 320–345 are Extracellular-facing; sequence RGKGFWHRMLKGFTGTICFGLTFAVR. Residues 346–366 traverse the membrane as a helical segment; sequence SNGLLNFLYVAWIWCGTLLWD. At 367 to 423 the chain is on the cytoplasmic side; that stretch reads EEMPIPDCHKLISTLAATKNERYKQEWQAKFWRFQQKRKQNRKVFRWTDPNFSRCVT. Residues 424-444 traverse the membrane as a helical segment; the sequence is LFIVIVCAISATLLFFTPYVF. The Extracellular portion of the chain corresponds to 445–520; the sequence is MTNFTADEFC…WSVKFFGYWK (76 aa). Residues 521–541 form a helical membrane-spanning segment; the sequence is IKKIPCFLMMLPAAILTVLAI. The Cytoplasmic segment spans residues 542-569; that stretch reads KSSWNDVFLNKRWNNIWVLTARSDHSLP. A helical transmembrane segment spans residues 570–590; sequence MAIHSSVLLFVAIFYINSEVF. Residues 591–592 are Extracellular-facing; it reads TR. Residues 593-613 form a helical membrane-spanning segment; the sequence is IIFSSSPFIYIYIATYIDKLT. The Cytoplasmic segment spans residues 614 to 648; the sequence is QGTIAGNRLWQYFESPGILPFFVFRRVWQDGWRGK. Residues 649-669 traverse the membrane as a helical segment; that stretch reads LLYIYILGYFVFGTMAHSAWL. The Extracellular segment spans residues 670-672; the sequence is PFT.

Belongs to the PIGV family. Expressed in epithelial tissues including the epidermis, pharynx, intestine, rectum and excretory cell during embryogenesis.

The protein localises to the endoplasmic reticulum membrane. Its pathway is glycolipid biosynthesis; glycosylphosphatidylinositol-anchor biosynthesis. Functionally, alpha-1,6-mannosyltransferase involved in glycosylphosphatidylinositol-anchor biosynthesis. Transfers the second mannose to the glycosylphosphatidylinositol during GPI precursor assembly. Required for maintenance of epithelial integrity during embryogenesis. The polypeptide is GPI mannosyltransferase pigv-1 (Caenorhabditis elegans).